The sequence spans 251 residues: Protein phosphatase 1 regulatory subunit 35 (251 aa).

Disordered stretches follow at residues 58–99 (LITV…QQTH) and 180–235 (PALA…VPRP). The span at 76 to 99 (PNKDEHGVETDREQSRECDGQQTH) shows a compositional bias: basic and acidic residues.

The protein belongs to the PPP1R35 family.

The protein resides in the cytoplasm. It localises to the cytoskeleton. The protein localises to the microtubule organizing center. It is found in the centrosome. Its subcellular location is the centriole. Its function is as follows. During centriole duplication, may play a role in the centriole elongation by promoting the recruitment of the microtubule-binding elongation machinery, leading to the centriole to centrosome conversion. In addition may play a role in the primary cilia assembly. The polypeptide is Protein phosphatase 1 regulatory subunit 35 (Danio rerio (Zebrafish)).